The chain runs to 386 residues: Bifunctional enzyme IspD/IspF (386 aa).

The interval 1–231 is 2-C-methyl-D-erythritol 4-phosphate cytidylyltransferase; the sequence is MKNGAVIIPA…REKKEPMQKI (231 aa). The segment at 232-386 is 2-C-methyl-D-erythritol 2,4-cyclodiphosphate synthase; it reads RIGHGFDAHQ…SCHAVVLLQQ (155 aa). A divalent metal cation-binding residues include D238 and H240. Residues 238 to 240 and 264 to 265 contribute to the 4-CDP-2-C-methyl-D-erythritol 2-phosphate site; these read DAH and HS. H272 contacts a divalent metal cation. 4-CDP-2-C-methyl-D-erythritol 2-phosphate contacts are provided by residues 286 to 288, 362 to 365, Y369, and R372; these read DIG and TTTE.

The protein in the N-terminal section; belongs to the IspD/TarI cytidylyltransferase family. IspD subfamily. This sequence in the C-terminal section; belongs to the IspF family. It depends on a divalent metal cation as a cofactor.

The catalysed reaction is 2-C-methyl-D-erythritol 4-phosphate + CTP + H(+) = 4-CDP-2-C-methyl-D-erythritol + diphosphate. The enzyme catalyses 4-CDP-2-C-methyl-D-erythritol 2-phosphate = 2-C-methyl-D-erythritol 2,4-cyclic diphosphate + CMP. The protein operates within isoprenoid biosynthesis; isopentenyl diphosphate biosynthesis via DXP pathway; isopentenyl diphosphate from 1-deoxy-D-xylulose 5-phosphate: step 2/6. It participates in isoprenoid biosynthesis; isopentenyl diphosphate biosynthesis via DXP pathway; isopentenyl diphosphate from 1-deoxy-D-xylulose 5-phosphate: step 4/6. Its function is as follows. Bifunctional enzyme that catalyzes the formation of 4-diphosphocytidyl-2-C-methyl-D-erythritol from CTP and 2-C-methyl-D-erythritol 4-phosphate (MEP) (IspD), and catalyzes the conversion of 4-diphosphocytidyl-2-C-methyl-D-erythritol 2-phosphate (CDP-ME2P) to 2-C-methyl-D-erythritol 2,4-cyclodiphosphate (ME-CPP) with a corresponding release of cytidine 5-monophosphate (CMP) (IspF). The chain is Bifunctional enzyme IspD/IspF from Desulfotalea psychrophila (strain LSv54 / DSM 12343).